Here is a 102-residue protein sequence, read N- to C-terminus: MDIKQTAVAGSLESSDIMVTVNPSDVQGITVQLESSVEKQFGQQIRKVIEETLKHLGVKAASVEAVDKGALDCTIKARTITAVHRAAQVEVYDWKEIDSWNA.

Position 14 is an O-(phosphoribosyl dephospho-coenzyme A)serine (Ser-14).

Belongs to the CitD family. In terms of assembly, oligomer with a subunit composition of (alpha,beta,gamma)6.

The protein localises to the cytoplasm. Functionally, covalent carrier of the coenzyme of citrate lyase. This is Citrate lyase acyl carrier protein from Streptococcus mutans serotype c (strain ATCC 700610 / UA159).